A 91-amino-acid chain; its full sequence is Bombyxin B-1 homolog (91 aa).

An N-terminal signal peptide occupies residues 1 to 19 (MKVSMFVVIVLCMVAASSA). Intrachain disulfides connect cysteine 27–cysteine 78, cysteine 39–cysteine 91, and cysteine 77–cysteine 82. A propeptide spans 49 to 69 (SGAQYARYGWQSPESREGARG) (c peptide like).

Belongs to the insulin family. As to quaternary structure, heterodimer of a B chain and an A chain linked by two disulfide bonds.

The protein resides in the secreted. Functionally, brain peptide responsible for activation of prothoracic glands to produce ecdysone in insects. This Samia cynthia (Ailanthus silkmoth) protein is Bombyxin B-1 homolog (SBXB1).